The sequence spans 147 residues: Hemoglobin subunit deltaH (147 aa).

Residues R3–H147 enclose the Globin domain. H64 and H93 together coordinate heme b.

This sequence belongs to the globin family. In terms of assembly, heterotetramer of two delta chains and two alpha chains. Red blood cells.

This Procavia capensis (Rock hyrax) protein is Hemoglobin subunit deltaH.